The sequence spans 416 residues: L-cysteine:1D-myo-inositol 2-amino-2-deoxy-alpha-D-glucopyranoside ligase (416 aa).

Residue C45 coordinates Zn(2+). L-cysteinyl-5'-AMP is bound by residues 45–48, T60, and 83–85; these read CGIT and NVT. Residues 47–57 carry the 'HIGH' region motif; the sequence is ITPYDSTHLGH. The 'ERGGDP' region motif lies at 191 to 196; the sequence is ERGGDP. W232 is an L-cysteinyl-5'-AMP binding site. Position 236 (C236) interacts with Zn(2+). 254-256 is a binding site for L-cysteinyl-5'-AMP; that stretch reads GSD. Position 261 (H261) interacts with Zn(2+). Residue V286 coordinates L-cysteinyl-5'-AMP. A 'KMSKS' region motif is present at residues 292–296; the sequence is KMSKS.

Belongs to the class-I aminoacyl-tRNA synthetase family. MshC subfamily. As to quaternary structure, monomer. Zn(2+) serves as cofactor.

It carries out the reaction 1D-myo-inositol 2-amino-2-deoxy-alpha-D-glucopyranoside + L-cysteine + ATP = 1D-myo-inositol 2-(L-cysteinylamino)-2-deoxy-alpha-D-glucopyranoside + AMP + diphosphate + H(+). In terms of biological role, catalyzes the ATP-dependent condensation of GlcN-Ins and L-cysteine to form L-Cys-GlcN-Ins. The protein is L-cysteine:1D-myo-inositol 2-amino-2-deoxy-alpha-D-glucopyranoside ligase of Brachybacterium faecium (strain ATCC 43885 / DSM 4810 / JCM 11609 / LMG 19847 / NBRC 14762 / NCIMB 9860 / 6-10).